Reading from the N-terminus, the 89-residue chain is LYR motif-containing protein 4 (89 aa).

This sequence belongs to the complex I LYR family.

The protein resides in the mitochondrion. It is found in the nucleus. It functions in the pathway cofactor biosynthesis; iron-sulfur cluster biosynthesis. Required for nuclear and mitochondrial iron-sulfur protein biosynthesis. The chain is LYR motif-containing protein 4 (lyrm4) from Danio rerio (Zebrafish).